We begin with the raw amino-acid sequence, 885 residues long: Eisosome protein 1 (885 aa).

Disordered regions lie at residues M1–P39 and L695–F885. Over residues D13–A23 the composition is skewed to polar residues. A compositionally biased stretch (basic and acidic residues) spans K701 to P725. The segment covering T726 to P757 has biased composition (low complexity). 2 stretches are compositionally biased toward basic and acidic residues: residues H779–S801 and S873–F885.

The protein belongs to the EIS1 family.

It is found in the cytoplasmic granule. Its subcellular location is the cell membrane. Required for normal formation of eisosomes, large cytoplasmic protein assemblies that localize to specialized domains on plasma membrane and mark the site of endocytosis. The sequence is that of Eisosome protein 1 (EIS1) from Candida glabrata (strain ATCC 2001 / BCRC 20586 / JCM 3761 / NBRC 0622 / NRRL Y-65 / CBS 138) (Yeast).